An 86-amino-acid chain; its full sequence is Serine protease inhibitor Kazal-type 2 (86 aa).

The signal sequence occupies residues 1–16 (MLRLVLLLLATDFAAS). Residues 32–86 (QFRTPDCHRFDYPVCSKHLSPVCGTDMNTYGNECTLCMKIREDGSHINIIKDEPC) enclose the Kazal-like domain. Cystine bridges form between Cys-38–Cys-68, Cys-46–Cys-65, and Cys-54–Cys-86.

The protein localises to the secreted. Its subcellular location is the cytoplasmic vesicle. It is found in the secretory vesicle. The protein resides in the acrosome. Its function is as follows. As a strong inhibitor of acrosin, it is required for normal spermiogenesis. It probably hinders premature activation of proacrosin and other proteases, thus preventing the cascade of events leading to spermiogenesis defects. May be involved in the regulation of serine protease-dependent germ cell apoptosis. It also inhibits trypsin. The protein is Serine protease inhibitor Kazal-type 2 (Spink2) of Rattus norvegicus (Rat).